Consider the following 246-residue polypeptide: Salivary antigen SP32 (246 aa).

Residues 1-23 (MSGHILTVGLIVVVAHCATLSSS) form the signal peptide. Residues 51-160 (DKFYPDISDD…PDLSKYKNSP (110 aa)) are disordered. A compositionally biased stretch (basic and acidic residues) spans 65 to 78 (VVRDNGRKGGDRGR). Over residues 79-124 (QSTPSGKESHPSATQTGGRRPSQSPCGESRPSGSATSGRRPSQSPR) the composition is skewed to polar residues. Basic and acidic residues predominate over residues 141-155 (QQDRRQNKKQPDLSK).

In terms of assembly, interacts with human DSG1. Interacts with human DSG3. In terms of tissue distribution, salivary gland (at protein level).

Its subcellular location is the secreted. In terms of biological role, down-regulates the expression of CD86 and HLA-DR on the surface of lipopolysaccharide (LPS)-stimulated human peripheral blood mononuclear cells (PBMCs). Reduces LPS-induced secretion of IL-1beta/IL1B in human PBMCs. Reduces LPS-induced secretion of various cytokines, such as IL-1beta, TNF-alpha/TNF, MCP-1/CCL2, IL6, IL27 and IL-1alpha/IL1A, in host cultured macrophages probably via inhibition of NF-kappa-B signaling pathway. Reduces production of IFN-gamma/IFNG, IL4 and IL6 in human lymphocytes activated with PMA/ionomycin. Exhibits anti-inflammatory activity in carrageenan-induced paw edema model in rats. In Phlebotomus papatasi (Sandfly), this protein is Salivary antigen SP32.